A 427-amino-acid polypeptide reads, in one-letter code: BTB/POZ domain-containing protein KCTD16 (427 aa).

In terms of domain architecture, BTB spans 25–98 (EVIELNVGGQ…LRDRQVVLPD (74 aa)). Position 112 is a phosphotyrosine (Tyr-112). Phosphoserine is present on residues Ser-130, Ser-137, Ser-143, and Ser-146.

In terms of assembly, homopentamer; forms an open pentamer. In contrast to other BTB domain-containing proteins, does not interact with CUL3. Interacts as a tetramer with GABBR1 and GABBR2. As to expression, expressed in the brain, mainly in the hippocampus.

Its subcellular location is the presynaptic cell membrane. It localises to the postsynaptic cell membrane. Functionally, auxiliary subunit of GABA-B receptors that determine the pharmacology and kinetics of the receptor response. Increases agonist potency and markedly alter the G-protein signaling of the receptors by accelerating onset and promoting desensitization. This chain is BTB/POZ domain-containing protein KCTD16 (Kctd16), found in Mus musculus (Mouse).